A 345-amino-acid chain; its full sequence is Transcription factor STKL1 (345 aa).

A disordered region spans residues 1–145 (MASLENPAID…KKGHAQRVWS (145 aa)). The span at 11-22 (SSSEFESSSEEI) shows a compositional bias: low complexity. A compositionally biased stretch (basic and acidic residues) spans 23–32 (SSSKESKPKE). Over residues 37-46 (VPSTKTLNSP) the composition is skewed to polar residues. The residue at position 105 (serine 105) is a Phosphoserine. A compositionally biased stretch (basic and acidic residues) spans 114-137 (RASEGTTSRDMHVKRIKKEGDNKK).

This sequence belongs to the GeBP family. As to expression, expressed strongly in leaves and flowers, weakly in roots, and very weakly in stems.

It localises to the nucleus. Functionally, transcription repressor that binds DNA in a sequence-specific manner, 5'-GCCT-3', to regulate the expression of PGR. Acts as a modulatory component for the glucose-triggered developmental leaf growth process. In Arabidopsis thaliana (Mouse-ear cress), this protein is Transcription factor STKL1.